The following is a 467-amino-acid chain: Receptor-like cytosolic serine/threonine-protein kinase RBK1 (467 aa).

The span at 1–24 (MAVEDNKNSESKNHQEVELHRNDL) shows a compositional bias: basic and acidic residues. Residues 1–73 (MAVEDNKNSE…PFSNTTKTVS (73 aa)) form a disordered region. The span at 40–71 (SDSDNSSSSCSSCSSDDKSSSTSSPFSNTTKT) shows a compositional bias: low complexity. Thr-142 bears the Phosphothreonine mark. The 278-residue stretch at 153–430 (FNPENMIGKG…LRGEDGPAEL (278 aa)) folds into the Protein kinase domain. ATP-binding positions include 159–167 (IGKGGHAEV) and Lys-181. Asp-278 functions as the Proton acceptor in the catalytic mechanism. Residue Ser-282 is modified to Phosphoserine. Thr-318 carries the phosphothreonine modification. The residue at position 326 (Tyr-326) is a Phosphotyrosine.

Belongs to the protein kinase superfamily. Ser/Thr protein kinase family. Interacts with ARAC5 and ARAC10. As to expression, mostly expressed in vasculature, hydathode endothem, leaf mesophyll cells and trichomes.

The protein resides in the cytoplasm. It is found in the endomembrane system. The protein localises to the nucleus. The catalysed reaction is L-seryl-[protein] + ATP = O-phospho-L-seryl-[protein] + ADP + H(+). The enzyme catalyses L-threonyl-[protein] + ATP = O-phospho-L-threonyl-[protein] + ADP + H(+). The chain is Receptor-like cytosolic serine/threonine-protein kinase RBK1 (RBK1) from Arabidopsis thaliana (Mouse-ear cress).